An 81-amino-acid chain; its full sequence is ATP synthase subunit c (81 aa).

2 consecutive transmembrane segments (helical) span residues 5–25 (IAAGALIGGGLIMAGGAIGAG) and 57–77 (VGLVEAAYFINLAFMALFVFA).

The protein belongs to the ATPase C chain family. F-type ATPases have 2 components, F(1) - the catalytic core - and F(0) - the membrane proton channel. F(1) has five subunits: alpha(3), beta(3), gamma(1), delta(1), epsilon(1). F(0) has three main subunits: a(1), b(2) and c(10-14). The alpha and beta chains form an alternating ring which encloses part of the gamma chain. F(1) is attached to F(0) by a central stalk formed by the gamma and epsilon chains, while a peripheral stalk is formed by the delta and b chains.

The protein localises to the cell membrane. F(1)F(0) ATP synthase produces ATP from ADP in the presence of a proton or sodium gradient. F-type ATPases consist of two structural domains, F(1) containing the extramembraneous catalytic core and F(0) containing the membrane proton channel, linked together by a central stalk and a peripheral stalk. During catalysis, ATP synthesis in the catalytic domain of F(1) is coupled via a rotary mechanism of the central stalk subunits to proton translocation. Its function is as follows. Key component of the F(0) channel; it plays a direct role in translocation across the membrane. A homomeric c-ring of between 10-14 subunits forms the central stalk rotor element with the F(1) delta and epsilon subunits. In Mycolicibacterium gilvum (strain PYR-GCK) (Mycobacterium gilvum (strain PYR-GCK)), this protein is ATP synthase subunit c.